A 272-amino-acid chain; its full sequence is MSSQELVTLNVGGKIFTTRFSTIKQFPASRLARMLDGRDQEFKMVGGQIFVDRDGDLFSFILDFLRTHQLLLPTEFSDYLRLQREALFYELRSLVDLLNPYLLQPRPALVEVHFLSRNTQAFFRVFGSCSKTIEMLTGRITVFTEQPSAPTWNGNFFPPQMTLLPLPPQRPSYHDLVFQCGSDSTTDNQTGVRYVSIKPDNRKLANGTNVLGLLIDTLLKEGFHLVSTRTVSSEDKTECYSFERIKSPEVLITNETPKPETIIIPEQSQIKK.

The BTB domain maps to 5–106 (ELVTLNVGGK…LLNPYLLQPR (102 aa)).

As to quaternary structure, can form homooligomers. Interacts with KCNA1 (via cytoplasmic N-terminal domain) and KCNA4. Ubiquitous in normal tissues and expressed in some tumor tissues.

It localises to the endoplasmic reticulum. Its function is as follows. Inhibits potassium fluxes in cells. May regulate Kv1 family channel proteins by retaining a fraction of channels in endomembranes. The sequence is that of Potassium channel regulatory protein (KCNRG) from Homo sapiens (Human).